We begin with the raw amino-acid sequence, 332 residues long: Glycerol-3-phosphate dehydrogenase [NAD(P)+] (332 aa).

Trp11, Arg30, and Lys108 together coordinate NADPH. Sn-glycerol 3-phosphate contacts are provided by Lys108, Gly137, and Ser139. Ala141 serves as a coordination point for NADPH. Sn-glycerol 3-phosphate contacts are provided by Lys192, Asp245, Ser255, Arg256, and Asn257. Lys192 (proton acceptor) is an active-site residue. Position 256 (Arg256) interacts with NADPH. Residues Val280 and Glu282 each coordinate NADPH.

The protein belongs to the NAD-dependent glycerol-3-phosphate dehydrogenase family.

The protein localises to the cytoplasm. It catalyses the reaction sn-glycerol 3-phosphate + NAD(+) = dihydroxyacetone phosphate + NADH + H(+). The catalysed reaction is sn-glycerol 3-phosphate + NADP(+) = dihydroxyacetone phosphate + NADPH + H(+). The protein operates within membrane lipid metabolism; glycerophospholipid metabolism. Its function is as follows. Catalyzes the reduction of the glycolytic intermediate dihydroxyacetone phosphate (DHAP) to sn-glycerol 3-phosphate (G3P), the key precursor for phospholipid synthesis. The protein is Glycerol-3-phosphate dehydrogenase [NAD(P)+] of Burkholderia ambifaria (strain MC40-6).